Here is a 392-residue protein sequence, read N- to C-terminus: Glutamine synthetase (392 aa).

A GS beta-grasp domain is found at 26 to 106 (VQVTYVWIDG…VMCEVLKYNR (81 aa)). Residues 113-392 (LRHTCKKIME…MASPRDAAVF (280 aa)) enclose the GS catalytic domain. Glu-134 is an ATP binding site. Mn(2+)-binding residues include Glu-134, Glu-136, Glu-196, and Glu-203. ATP is bound at residue 203 to 208 (EFQVGP). 246–247 (NW) is an L-glutamate binding site. His-253 provides a ligand contact to Mn(2+). Residues 255–257 (NYS), Arg-319, and Arg-324 contribute to the ATP site. An L-glutamate-binding site is contributed by Arg-319. ADP is bound at residue 336 to 338 (YFE). Glu-338 provides a ligand contact to Mn(2+). Residue Arg-340 participates in L-glutamate binding.

This sequence belongs to the glutamine synthetase family. Requires Mg(2+) as cofactor. The cofactor is Mn(2+).

Its subcellular location is the cytoplasm. The protein localises to the cytosol. It is found in the microsome. It localises to the mitochondrion. The enzyme catalyses L-glutamate + NH4(+) + ATP = L-glutamine + ADP + phosphate + H(+). In terms of biological role, glutamine synthetase that catalyzes the ATP-dependent conversion of glutamate and ammonia to glutamine. This Xenopus laevis (African clawed frog) protein is Glutamine synthetase.